The sequence spans 96 residues: Putative septation protein SpoVG (96 aa).

Belongs to the SpoVG family.

Its function is as follows. Could be involved in septation. This chain is Putative septation protein SpoVG, found in Oceanobacillus iheyensis (strain DSM 14371 / CIP 107618 / JCM 11309 / KCTC 3954 / HTE831).